The chain runs to 348 residues: Protein arginine N-methyltransferase 1 (348 aa).

In terms of domain architecture, SAM-dependent MTase PRMT-type spans Lys24–Gln342. His37, Arg46, Gly70, Glu92, and Glu121 together coordinate S-adenosyl-L-methionine. Active-site residues include Glu139 and Glu148.

The protein belongs to the class I-like SAM-binding methyltransferase superfamily. Protein arginine N-methyltransferase family. As to quaternary structure, interacts with daf-16. Interacts with pgl-1 and pgl-3. Interacts with alg-1. Widely expressed in pharyngeal, body wall muscle, intestinal and vulval cells.

The protein resides in the cytoplasm. It localises to the nucleus. The enzyme catalyses L-arginyl-[protein] + 2 S-adenosyl-L-methionine = N(omega),N(omega)-dimethyl-L-arginyl-[protein] + 2 S-adenosyl-L-homocysteine + 2 H(+). The catalysed reaction is L-arginyl-[protein] + S-adenosyl-L-methionine = N(omega)-methyl-L-arginyl-[protein] + S-adenosyl-L-homocysteine + H(+). Functionally, arginine methyltransferase that methylates (mono and asymmetric dimethylation) the guanidino nitrogens of arginyl residues present in target proteins. Catalyzes the formation of monomethylarginine and asymmetric dimethylarginine on histones H2A and H4, a specific tag for epigenetic transcriptional activation. Catalyzes asymmetric arginine dimethylation of mitochondrial proteins necessary for mitochondrial oxidative phosphorylation activity and thus aerobic respiration and ATP synthesis, and the mitochondrial stress response. Methylates arginine residues in P-granule components pgl-1 and pgl-3 to promote P-granule degradation by autophagy in somatic cells to ensure exclusive localization of the P-granules in germ cells. Modulates the interaction of P-granule proteins epg-2 and sepa-1. Methylates arginine residues in daf-16, which blocks ftt-2 binding to daf-16, prevents akt-mediated phosphorylation and allows for daf-16 to translocate to the nucleus. In turn, association with daf-16 therefore allows for the transcriptional activation of daf-16 and regulation of longevity-related genes. Maintains lifespan by modulating daf-16 activity downstream of the daf-2 signaling pathway. Plays a role in heat and oxidative stress resistance. Role in stress resistance and also fat storage may be in association with the daf-2 signaling pathway. Required for normal feeding behavior. The sequence is that of Protein arginine N-methyltransferase 1 from Caenorhabditis elegans.